Reading from the N-terminus, the 129-residue chain is Small ribosomal subunit protein uS12 (129 aa).

The segment at 1–25 (MPTYNQLVRFGRKSKTRKTKSPALE) is disordered. Basic residues predominate over residues 10 to 20 (FGRKSKTRKTK). Residue D89 is modified to 3-methylthioaspartic acid. Residues 110–129 (RKQGRSRYGAPSKQVAVTKK) are disordered.

It belongs to the universal ribosomal protein uS12 family. As to quaternary structure, part of the 30S ribosomal subunit. Contacts proteins S8 and S17. May interact with IF1 in the 30S initiation complex.

Functionally, with S4 and S5 plays an important role in translational accuracy. In terms of biological role, interacts with and stabilizes bases of the 16S rRNA that are involved in tRNA selection in the A site and with the mRNA backbone. Located at the interface of the 30S and 50S subunits, it traverses the body of the 30S subunit contacting proteins on the other side and probably holding the rRNA structure together. The combined cluster of proteins S8, S12 and S17 appears to hold together the shoulder and platform of the 30S subunit. This Rickettsia canadensis (strain McKiel) protein is Small ribosomal subunit protein uS12.